A 465-amino-acid chain; its full sequence is Cysteine--tRNA ligase (465 aa).

Cysteine 27 contacts Zn(2+). The 'HIGH' region motif lies at 29-39 (PTVYDDAHLGH). Positions 207, 237, and 241 each coordinate Zn(2+). The short motif at 269–273 (KMSKS) is the 'KMSKS' region element. Lysine 272 is a binding site for ATP.

It belongs to the class-I aminoacyl-tRNA synthetase family. As to quaternary structure, monomer. The cofactor is Zn(2+).

The protein localises to the cytoplasm. It carries out the reaction tRNA(Cys) + L-cysteine + ATP = L-cysteinyl-tRNA(Cys) + AMP + diphosphate. The sequence is that of Cysteine--tRNA ligase from Nitratiruptor sp. (strain SB155-2).